A 138-amino-acid polypeptide reads, in one-letter code: Large ribosomal subunit protein eL27 (138 aa).

The protein belongs to the eukaryotic ribosomal protein eL27 family.

In Solanum tuberosum (Potato), this protein is Large ribosomal subunit protein eL27 (RPL27).